A 497-amino-acid polypeptide reads, in one-letter code: Validamine 7-phosphate valienyltransferase (497 aa).

Asp-158 lines the GDP-valienol pocket. His-182 is a binding site for validamine 7-phosphate. GDP-valienol contacts are provided by residues Arg-290, Lys-295, Arg-321, 325–326 (NR), 361–362 (ND), and Thr-366. 383–386 (DGQN) lines the validamine 7-phosphate pocket. Residues 387-388 (LS) and Glu-391 each bind GDP-valienol.

It belongs to the glycosyltransferase 20 family. In terms of assembly, homodimer.

The catalysed reaction is validamine 7-phosphate + GDP-valienol = validoxylamine A 7'-phosphate + GDP + H(+). Its function is as follows. Involved in the biosynthesis of the antifungal agent validamycin A. Catalyzes the condensation between GDP-valienol and validamine 7-phosphate via a nonglycosidic C-N bond formation to yield validoxylamine A 7'-phosphate. This chain is Validamine 7-phosphate valienyltransferase, found in Streptomyces hygroscopicus subsp. limoneus.